A 122-amino-acid polypeptide reads, in one-letter code: UPF0102 protein ECH_0093 (122 aa).

This sequence belongs to the UPF0102 family.

The chain is UPF0102 protein ECH_0093 from Ehrlichia chaffeensis (strain ATCC CRL-10679 / Arkansas).